Here is a 1075-residue protein sequence, read N- to C-terminus: MEQTLAILKNDNSTLVAEMQNQLVHDFSPNGTALPELDIKAFVQKLGQRLCHRPYVYSAFMDVVKALHNEIVDFPGFIERISVILRDYPDLLEYLNIFLPSSYKYLLSNSGANFTLQFTTPSGPVSTPSTYVATYNDLPCTYHRAIGFVSRVRRALLSNPEQFFKLQDSLRKFKNSECSLSELQTIVTSLLAEHPSLAHEFHNFLPSSIFFGSKPPLGSFPLRGIQSSQFTLSNISDLLSQSRPDNLSPFSHLSNESSDFFKNVKNVLTDVETYHEFLKLLNLYVQGIIDRNILVSRGFGFLKSNSGLWRSFLSLTSLSPEEFLSVYNSACSDFPECGPSYRLLPVEERNISCSGRDDFAWGILNDDWVSHPTWASEESGFIVQRKTPYEEAMTKLEEERYEFDRHIEATSWTIKSLKKIQNRINELPEEERETYTLEEGLGLPSKSIYKKTIKLVYTSEHAEEMFKALERMPCLTLPLVISRLEEKNEEWKSVKRSLQPGWRSIEFKNYDKSLDSQCVYFKARDKKNVSSKFLLAEADILRSQAKLHFPLRSRSAFEFSFVYDNEIVLFDTCYMVCTYIVCNSPSGLKKVEHFFKNILPLHFGLEKDKFSIFLDQVFRGPDYDVNAPNIVGNKPVRRKRSNSITQLTEFVKQPKINGQRESRSAAAARKKEESGNKSQSNSQNSLSDESGNVTPVSKKQLSQPAAAIKASLKYPSHPDSLLEHQDHAGDTENEMHDDVDKEQFGYSSMYVFFRLFNLLYERLYELQRLEDQVSIIQQRIIPNPVSQKQKIWRDRWNDLSDVPDEKTHYENTYVMILRLIYGIVDQSAFEDYLRFYYGNKAYKIYTIDKLVWSAAKQVHHIVSDGKYKFVTSLVEQNSSASPKKNYDDFLYRLEIEKLLNPDEILFRFCWINKFKSFGIKIMKRANLIVDQSLDTQRRVWKKYVQNYRIQKLTEEISYKNYRCPFLCRNIEKERTVEQLVSRLQTKLLRSAELVSGLQAKLCLDSFKLLYLPRTEDSYIDASYLRLRDTDFLDCQNKRKQRWRNRWESLLKSVRGTSDNTAEVNFDADINALFIP.

PAH domains are found at residues 28 to 102 (SPNG…LPSS), 138 to 208 (LPCT…LPSS), and 243 to 319 (RPDN…TSLS). Phosphoserine occurs at positions 641 and 643. The tract at residues 647–700 (LTEFVKQPKINGQRESRSAAAARKKEESGNKSQSNSQNSLSDESGNVTPVSKKQ) is disordered. Residues 658 to 675 (GQRESRSAAAARKKEESG) are compositionally biased toward basic and acidic residues. Positions 676-691 (NKSQSNSQNSLSDESG) are enriched in low complexity.

As to quaternary structure, heterotetramer of alp13, clr6, prw1 and pst2.

It localises to the nucleus. In terms of biological role, has a role in chromatin assembly and chromosome segregation. Involved in the deacetylation of histones. The chain is Paired amphipathic helix protein pst2 (pst2) from Schizosaccharomyces pombe (strain 972 / ATCC 24843) (Fission yeast).